The primary structure comprises 236 residues: 3-deoxy-D-manno-octulosonic acid kinase (236 aa).

Residue aspartate 166 is part of the active site.

Belongs to the protein kinase superfamily. KdkA/RfaP family.

The protein resides in the cell inner membrane. It catalyses the reaction an alpha-Kdo-(2-&gt;6)-lipid IVA + ATP = a 4-O-phospho-alpha-Kdo-(2-&gt;6)-lipid IVA + ADP + H(+). It functions in the pathway bacterial outer membrane biogenesis; LPS core biosynthesis. Its function is as follows. Catalyzes the ATP-dependent phosphorylation of the 3-deoxy-D-manno-octulosonic acid (Kdo) residue in Kdo-lipid IV(A) at the 4-OH position. This Photobacterium profundum (strain SS9) protein is 3-deoxy-D-manno-octulosonic acid kinase.